Consider the following 161-residue polypeptide: Glycine/sarcosine/betaine reductase complex component A2 (161 aa).

The active site involves selenocysteine 42. Selenocysteine 42 is a non-standard amino acid (selenocysteine).

It belongs to the GrdA family. In terms of assembly, monomer. Component of the glycine, sarcosine and betaine reductase complexes, together with components B and C.

The enzyme catalyses acetyl phosphate + [thioredoxin]-disulfide + NH4(+) + H2O = [thioredoxin]-dithiol + glycine + phosphate + H(+). It carries out the reaction acetyl phosphate + methylamine + [thioredoxin]-disulfide + H2O = sarcosine + [thioredoxin]-dithiol + phosphate + H(+). It catalyses the reaction acetyl phosphate + trimethylamine + [thioredoxin]-disulfide + H2O = glycine betaine + [thioredoxin]-dithiol + phosphate + H(+). Functionally, in the first step of glycine, betaine and sarcosine reductases, the substrate is bound to component PB via a Schiff base intermediate. Then the PB-activated substrate is nucleophilically attacked by the selenol anion of component PA to transform it to a carboxymethylated selenoether and the respective amine. By action of component PC, acetyl phosphate is formed, leaving component PA in its oxidized state. Finally component PA becomes reduced by the thioredoxin system to start a new catalytic cycle of reductive deamination. This Photobacterium profundum (strain SS9) protein is Glycine/sarcosine/betaine reductase complex component A2 (grdA2).